The sequence spans 331 residues: Olfactory receptor 6S1 (331 aa).

Residues 1–29 are Extracellular-facing; the sequence is MSPDGNHSSDPTEFVLAGLPNLNSARVEL. Asparagine 6 is a glycosylation site (N-linked (GlcNAc...) asparagine). A helical transmembrane segment spans residues 30–50; it reads FSVFLLVYLLNLTGNVLIVGV. At 51-59 the chain is on the cytoplasmic side; sequence VRADTRLQT. A helical transmembrane segment spans residues 60–80; the sequence is PMYFFLGNLSCLEILLTSVII. Residues 81–99 lie on the Extracellular side of the membrane; it reads PKMLSNFLSRQHTISFAAC. Cysteine 99 and cysteine 182 are oxidised to a cystine. Residues 100–120 traverse the membrane as a helical segment; that stretch reads ITQFYFYFFLGASEFLLLAVM. Over 121-147 the chain is Cytoplasmic; it reads SADRYLAICHPLRYPLLMSGAVCFRVA. The chain crosses the membrane as a helical span at residues 148-168; it reads LACWVGGLVPVLGPTVAVALL. Over 169–207 the chain is Extracellular; sequence PFCKQGAVVQHFFCDSGPLLRLACTNTKKLEETDFVLAS. The chain crosses the membrane as a helical span at residues 208–228; it reads LVIVSSLLITAVSYGLIVLAV. Residues 229-242 are Cytoplasmic-facing; sequence LSIPSASGRQKAFS. Residues 243 to 263 form a helical membrane-spanning segment; that stretch reads TCTSHLIVVTLFYGSAIFLYV. The Extracellular portion of the chain corresponds to 264-274; the sequence is RPSQSGSVDTN. A helical membrane pass occupies residues 275–295; sequence WAVTVITTFVTPLLNPFIYAL. Residues 296–331 are Cytoplasmic-facing; sequence RNEQVKEALKDMFRKVVAGVLGNLLLDKCLSEKAVK.

The protein belongs to the G-protein coupled receptor 1 family.

The protein resides in the cell membrane. Odorant receptor. The sequence is that of Olfactory receptor 6S1 (OR6S1) from Homo sapiens (Human).